The chain runs to 314 residues: Olfactory receptor 5B12 (314 aa).

Residues 1-23 lie on the Extracellular side of the membrane; it reads MENNTEVTEFILVGLTDDPELQI. N-linked (GlcNAc...) asparagine glycosylation occurs at N3. Residues 24–44 form a helical membrane-spanning segment; the sequence is PLFIVFLFIYLITLVGNLGMI. The Cytoplasmic segment spans residues 45–52; the sequence is ELILLDSC. The chain crosses the membrane as a helical span at residues 53–73; that stretch reads LHTPMYFFLSNLSLVDFGYSS. Topologically, residues 74–97 are extracellular; the sequence is AVTPKVMVGFLTGDKFILYNACAT. A disulfide bridge links C95 with C187. Residues 98–118 form a helical membrane-spanning segment; that stretch reads QFFFFVAFITAESFLLASMAY. Residues 119-137 are Cytoplasmic-facing; it reads DRYAALCKPLHYTTTMTTN. The chain crosses the membrane as a helical span at residues 138-158; that stretch reads VCACLAIGSYICGFLNASIHT. The Extracellular segment spans residues 159–194; it reads GNTFRLSFCRSNVVEHFFCDAPPLLTLSCSDNYISE. A helical membrane pass occupies residues 195 to 215; sequence MVIFFVVGFNDLFSILVILIS. The Cytoplasmic portion of the chain corresponds to 216–235; that stretch reads YLFIFITIMKMRSPEGRQKA. The helical transmembrane segment at 236 to 256 threads the bilayer; that stretch reads FSTCASHLTAVSIFYGTGIFM. Residues 257–269 are Extracellular-facing; it reads YLRPNSSHFMGTD. The N-linked (GlcNAc...) asparagine glycan is linked to N261. The chain crosses the membrane as a helical span at residues 270 to 290; it reads KMASVFYAIVIPMLNPLVYSL. Residues 291–314 lie on the Cytoplasmic side of the membrane; that stretch reads RNKEVKSAFKKTVGKAKASIGFIF.

This sequence belongs to the G-protein coupled receptor 1 family.

It localises to the cell membrane. Odorant receptor. This is Olfactory receptor 5B12 (OR5B12) from Homo sapiens (Human).